The primary structure comprises 49 residues: uncharacterized protein (49 aa).

A helical transmembrane segment spans residues 8–28 (FFLFSSGVLQATTLLLVILIF).

It localises to the cell membrane. This is an uncharacterized protein from Bacillus subtilis (strain 168).